Consider the following 289-residue polypeptide: Prepilin leader peptidase/N-methyltransferase (289 aa).

Residues 13–33 (AFVLCALVLGLLVGSFLNVVI) traverse the membrane as a helical segment. Residues Cys-72, Cys-75, Cys-97, and Cys-100 each contribute to the Zn(2+) site. Transmembrane regions (helical) follow at residues 128–148 (FSWQ…MSMI), 159–179 (LVLP…FASL), 183–203 (LWGA…FKLV), 228–248 (VLPL…TVML), and 256–276 (GTPI…LLWG).

This sequence belongs to the peptidase A24 family. Zn(2+) is required as a cofactor.

The protein localises to the cell inner membrane. The catalysed reaction is Typically cleaves a -Gly-|-Phe- bond to release an N-terminal, basic peptide of 5-8 residues from type IV prepilin, and then N-methylates the new N-terminal amino group, the methyl donor being S-adenosyl-L-methionine.. Plays an essential role in type IV pili and type II pseudopili formation by proteolytically removing the leader sequence from substrate proteins and subsequently monomethylating the alpha-amino group of the newly exposed N-terminal phenylalanine. This Stutzerimonas stutzeri (Pseudomonas stutzeri) protein is Prepilin leader peptidase/N-methyltransferase (pilD).